The sequence spans 332 residues: Formamidase (332 aa).

A CN hydrolase domain is found at 14–259 (FLTALIQYPV…WEIVTAEVYP (246 aa)). Glutamate 60 serves as the catalytic Proton acceptor. Lysine 132 (proton donor) is an active-site residue. The Nucleophile role is filled by cysteine 165.

The protein belongs to the carbon-nitrogen hydrolase superfamily. Aliphatic amidase family.

It carries out the reaction formamide + H2O = formate + NH4(+). In terms of biological role, is an aliphatic amidase with a restricted substrate specificity, as it only hydrolyzes formamide. The protein is Formamidase of Bacillus cereus (strain G9842).